A 115-amino-acid polypeptide reads, in one-letter code: Replication initiation control protein YabA (115 aa).

Histidine 85, cysteine 87, cysteine 101, and cysteine 104 together coordinate Zn(2+).

Belongs to the YabA family. Homotetramer. Interacts with both DnaA and DnaN, acting as a bridge between these two proteins. Zn(2+) serves as cofactor.

The protein localises to the cytoplasm. Its subcellular location is the nucleoid. In terms of biological role, involved in control of chromosome replication initiation. Inhibits the cooperative binding of DnaA to the oriC region, thus negatively regulating initiation of chromosome replication. Inhibits the ability of DnaA-ATP to form a helix on DNA; does not disassemble preformed DnaA-DNA helices. Decreases the residence time of DnaA on the chromosome at its binding sites (oriC, replication forks and promoter-binding sites). Tethers DnaA to the replication machinery via the DNA polymerase beta sliding clamp subunit (dnaN). Associates with oriC and other DnaA targets on the chromosome in a DnaA-dependent manner. This is Replication initiation control protein YabA from Lactiplantibacillus plantarum (strain ATCC BAA-793 / NCIMB 8826 / WCFS1) (Lactobacillus plantarum).